The following is a 31-amino-acid chain: Large ribosomal subunit protein bL21 (31 aa).

The protein belongs to the bacterial ribosomal protein bL21 family. Part of the 50S ribosomal subunit. Contacts protein L20.

This protein binds to 23S rRNA in the presence of protein L20. The polypeptide is Large ribosomal subunit protein bL21 (rplU) (Streptococcus thermophilus).